The sequence spans 349 residues: Peroxidase 7 (349 aa).

The first 22 residues, 1–22 (MKLAVVSVVVILGVLVAWPVSA), serve as a signal peptide directing secretion. Intrachain disulfides connect Cys60–Cys136, Cys93–Cys98, Cys142–Cys341, and Cys220–Cys252. Catalysis depends on His91, which acts as the Proton acceptor. Asp92, Val95, Gly97, Asp99, and Ser101 together coordinate Ca(2+). Substrate is bound at residue Pro183. Heme b is bound at residue His213. Thr214 contributes to the Ca(2+) binding site. N-linked (GlcNAc...) asparagine glycosylation occurs at Asn231. Ca(2+) is bound by residues Asp262, Thr265, and Asp270.

This sequence belongs to the peroxidase family. Classical plant (class III) peroxidase subfamily. Heme b serves as cofactor. It depends on Ca(2+) as a cofactor.

It is found in the secreted. The catalysed reaction is 2 a phenolic donor + H2O2 = 2 a phenolic radical donor + 2 H2O. Removal of H(2)O(2), oxidation of toxic reductants, biosynthesis and degradation of lignin, suberization, auxin catabolism, response to environmental stresses such as wounding, pathogen attack and oxidative stress. These functions might be dependent on each isozyme/isoform in each plant tissue. In Arabidopsis thaliana (Mouse-ear cress), this protein is Peroxidase 7 (PER7).